The sequence spans 699 residues: Elongation factor G (699 aa).

The region spanning 8-283 (EHIRNIGICA…AVVDFLPSPI (276 aa)) is the tr-type G domain. GTP contacts are provided by residues 17 to 24 (AHIDAGKT), 81 to 85 (DTPGH), and 135 to 138 (NKMD).

It belongs to the TRAFAC class translation factor GTPase superfamily. Classic translation factor GTPase family. EF-G/EF-2 subfamily.

It is found in the cytoplasm. In terms of biological role, catalyzes the GTP-dependent ribosomal translocation step during translation elongation. During this step, the ribosome changes from the pre-translocational (PRE) to the post-translocational (POST) state as the newly formed A-site-bound peptidyl-tRNA and P-site-bound deacylated tRNA move to the P and E sites, respectively. Catalyzes the coordinated movement of the two tRNA molecules, the mRNA and conformational changes in the ribosome. This is Elongation factor G from Rickettsia felis (strain ATCC VR-1525 / URRWXCal2) (Rickettsia azadi).